The primary structure comprises 174 residues: Sarcoplasmic calcium-binding protein (174 aa).

N-acetylserine is present on Ser-1. EF-hand domains lie at 3–38 (LWVQKMKTYFNRIDFDKDGAITRMDFESMAERFAKE), 55–90 (GVWDNFLTAVAGGKGIDETTFINSMKEMVKNPEAKS), 91–126 (VVEGPLPLFFRAVDTNEDNNISRDEYGIFFGMLGLD), and 127–160 (KTMAPASFDAIDTNNDGLLSLEEFVIAGSDFFMN). Ca(2+) contacts are provided by Asp-16, Asp-18, Asp-20, and Asp-27. 9 residues coordinate Ca(2+): Asp-104, Asn-106, Asp-108, Asn-110, Glu-115, Asp-138, Asn-140, Asp-142, and Glu-149.

Functionally, like parvalbumins, SCPs seem to be more abundant in fast contracting muscles, but no functional relationship can be established from this distribution. The chain is Sarcoplasmic calcium-binding protein from Hediste diversicolor (Sandworm).